Here is a 304-residue protein sequence, read N- to C-terminus: Nod factor export ATP-binding protein I (304 aa).

Residues I6–Y236 form the ABC transporter domain. G38 to T45 contributes to the ATP binding site.

The protein belongs to the ABC transporter superfamily. Lipooligosaccharide exporter (TC 3.A.1.102) family. In terms of assembly, the complex is composed of two ATP-binding proteins (NodI) and two transmembrane proteins (NodJ).

Its subcellular location is the cell inner membrane. Part of the ABC transporter complex NodIJ involved in the export of the nodulation factors (Nod factors), the bacterial signal molecules that induce symbiosis and subsequent nodulation induction. Nod factors are LCO (lipo-chitin oligosaccharide), a modified beta-1,4-linked N-acetylglucosamine oligosaccharide. This subunit is responsible for energy coupling to the transport system. This is Nod factor export ATP-binding protein I from Burkholderia orbicola (strain AU 1054).